Here is a 48-residue protein sequence, read N- to C-terminus: Light-harvesting polypeptide B-885 beta-2 chain (48 aa).

The Cytoplasmic portion of the chain corresponds to 1-20 (AEDRKSLSGLTEQEAQEFGT). The chain crosses the membrane as a helical span at residues 21-43 (LYTQGVAFVAVIAIVAHALVWAW). Histidine 37 contacts a bacteriochlorophyll. At 44 to 48 (RPWLQ) the chain is on the periplasmic side.

This sequence belongs to the antenna complex beta subunit family. The core complex is formed by different alpha and beta chains, binding bacteriochlorophyll molecules, and arranged most probably in tetrameric structures disposed around the reaction center. The non-pigmented gamma chains may constitute additional components.

The protein localises to the cell inner membrane. In terms of biological role, antenna complexes are light-harvesting systems, which transfer the excitation energy to the reaction centers. This Rhodocyclus tenuis (Rhodospirillum tenue) protein is Light-harvesting polypeptide B-885 beta-2 chain.